The primary structure comprises 357 residues: Chorismate synthase (357 aa).

Arginine 47 contacts NADP(+). Residues 123–125, glycine 281, 296–300, and arginine 324 each bind FMN; these read RAS and KPTSS.

Belongs to the chorismate synthase family. As to quaternary structure, homotetramer. FMNH2 serves as cofactor.

It catalyses the reaction 5-O-(1-carboxyvinyl)-3-phosphoshikimate = chorismate + phosphate. It functions in the pathway metabolic intermediate biosynthesis; chorismate biosynthesis; chorismate from D-erythrose 4-phosphate and phosphoenolpyruvate: step 7/7. Functionally, catalyzes the anti-1,4-elimination of the C-3 phosphate and the C-6 proR hydrogen from 5-enolpyruvylshikimate-3-phosphate (EPSP) to yield chorismate, which is the branch point compound that serves as the starting substrate for the three terminal pathways of aromatic amino acid biosynthesis. This reaction introduces a second double bond into the aromatic ring system. This is Chorismate synthase from Chlamydia trachomatis serovar D (strain ATCC VR-885 / DSM 19411 / UW-3/Cx).